Consider the following 180-residue polypeptide: Inner membrane-spanning protein YciB (180 aa).

6 consecutive transmembrane segments (helical) span residues 4 to 24 (FLSEIGPVIAFFAGFFYGGGI), 25 to 45 (QHATLYMLITSVICITLCYVI), 49 to 69 (VSKLSIISTTVLLVSGSITLI), 76 to 96 (IKIKPTILYVIFGIIFLMSGI), 118 to 138 (ITLSYRTAAFFFFMAVVNEVV), and 150 to 170 (FKVFGVIPITFIFILLQLPLL).

It belongs to the YciB family.

The protein resides in the cell inner membrane. Functionally, plays a role in cell envelope biogenesis, maintenance of cell envelope integrity and membrane homeostasis. The polypeptide is Inner membrane-spanning protein YciB (Rickettsia rickettsii (strain Iowa)).